We begin with the raw amino-acid sequence, 304 residues long: D-alanine--D-alanine ligase (304 aa).

Residues 101–298 (KKIFIKNKIL…FIKLIEWILK (198 aa)) form the ATP-grasp domain. Residue 131 to 184 (EKNLKFPVVVKPINEGSSVHVYICDKTNILKNLKVLKSYNEILIEEFIPGREIQ) coordinates ATP. Mg(2+) contacts are provided by D253, E265, and N267.

The protein belongs to the D-alanine--D-alanine ligase family. Requires Mg(2+) as cofactor. Mn(2+) serves as cofactor.

Its subcellular location is the cytoplasm. The catalysed reaction is 2 D-alanine + ATP = D-alanyl-D-alanine + ADP + phosphate + H(+). It functions in the pathway cell wall biogenesis; peptidoglycan biosynthesis. Functionally, cell wall formation. The protein is D-alanine--D-alanine ligase of Pelagibacter ubique (strain HTCC1062).